A 202-amino-acid chain; its full sequence is NADH-quinone oxidoreductase subunit C (202 aa).

Belongs to the complex I 30 kDa subunit family. In terms of assembly, NDH-1 is composed of 14 different subunits. Subunits NuoB, C, D, E, F, and G constitute the peripheral sector of the complex.

It localises to the cell inner membrane. It carries out the reaction a quinone + NADH + 5 H(+)(in) = a quinol + NAD(+) + 4 H(+)(out). Its function is as follows. NDH-1 shuttles electrons from NADH, via FMN and iron-sulfur (Fe-S) centers, to quinones in the respiratory chain. The immediate electron acceptor for the enzyme in this species is believed to be ubiquinone. Couples the redox reaction to proton translocation (for every two electrons transferred, four hydrogen ions are translocated across the cytoplasmic membrane), and thus conserves the redox energy in a proton gradient. This Acidovorax sp. (strain JS42) protein is NADH-quinone oxidoreductase subunit C.